The chain runs to 872 residues: Alanine--tRNA ligase (872 aa).

4 residues coordinate Zn(2+): histidine 567, histidine 571, cysteine 669, and histidine 673.

This sequence belongs to the class-II aminoacyl-tRNA synthetase family. Zn(2+) is required as a cofactor.

Its subcellular location is the cytoplasm. The enzyme catalyses tRNA(Ala) + L-alanine + ATP = L-alanyl-tRNA(Ala) + AMP + diphosphate. In terms of biological role, catalyzes the attachment of alanine to tRNA(Ala) in a two-step reaction: alanine is first activated by ATP to form Ala-AMP and then transferred to the acceptor end of tRNA(Ala). Also edits incorrectly charged Ser-tRNA(Ala) and Gly-tRNA(Ala) via its editing domain. The sequence is that of Alanine--tRNA ligase from Streptococcus sanguinis (strain SK36).